The following is a 544-amino-acid chain: Probable protein kinase UbiB (544 aa).

In terms of domain architecture, Protein kinase spans 123–501 (DFDIKPLASA…KRQQAKGQFL (379 aa)). ATP is bound by residues 129 to 137 (LASASIAQV) and Lys152. Asp287 serves as the catalytic Proton acceptor. Residues 515 to 537 (LLTSNITVLASISAATGAAFWLF) traverse the membrane as a helical segment.

The protein belongs to the ABC1 family. UbiB subfamily.

Its subcellular location is the cell inner membrane. It functions in the pathway cofactor biosynthesis; ubiquinone biosynthesis [regulation]. In terms of biological role, is probably a protein kinase regulator of UbiI activity which is involved in aerobic coenzyme Q (ubiquinone) biosynthesis. This Aliivibrio fischeri (strain MJ11) (Vibrio fischeri) protein is Probable protein kinase UbiB.